The chain runs to 185 residues: Ribosome-recycling factor (185 aa).

Belongs to the RRF family.

It localises to the cytoplasm. Its function is as follows. Responsible for the release of ribosomes from messenger RNA at the termination of protein biosynthesis. May increase the efficiency of translation by recycling ribosomes from one round of translation to another. This Klebsiella pneumoniae (strain 342) protein is Ribosome-recycling factor.